Here is a 192-residue protein sequence, read N- to C-terminus: NADH-quinone oxidoreductase subunit B (192 aa).

[4Fe-4S] cluster contacts are provided by Cys71, Cys72, Cys136, and Cys166.

The protein belongs to the complex I 20 kDa subunit family. In terms of assembly, NDH-1 is composed of 14 different subunits. Subunits NuoB, C, D, E, F, and G constitute the peripheral sector of the complex. [4Fe-4S] cluster is required as a cofactor.

It is found in the cell inner membrane. The catalysed reaction is a quinone + NADH + 5 H(+)(in) = a quinol + NAD(+) + 4 H(+)(out). Its function is as follows. NDH-1 shuttles electrons from NADH, via FMN and iron-sulfur (Fe-S) centers, to quinones in the respiratory chain. Couples the redox reaction to proton translocation (for every two electrons transferred, four hydrogen ions are translocated across the cytoplasmic membrane), and thus conserves the redox energy in a proton gradient. The polypeptide is NADH-quinone oxidoreductase subunit B (Azorhizobium caulinodans (strain ATCC 43989 / DSM 5975 / JCM 20966 / LMG 6465 / NBRC 14845 / NCIMB 13405 / ORS 571)).